Reading from the N-terminus, the 1624-residue chain is Putative serine/threonine-protein kinase/receptor R831 (1624 aa).

The signal sequence occupies residues 1 to 25 (MHSVYTKYTIILILLVIYQGLPTNT). Asn152, Asn169, Asn200, Asn205, Asn225, Asn240, Asn245, Asn292, Asn364, Asn479, Asn541, Asn720, and Asn737 each carry an N-linked (GlcNAc...) asparagine; by host glycan. The helical transmembrane segment at 747-767 (VIPIACIFGLLLLTLLIVIIF) threads the bilayer. Residues 786–1049 (LEIGETLGTG…EIMTRLSNIL (264 aa)) enclose the Protein kinase 1 domain. Residues 792-800 (LGTGGYGEV) and Lys813 each bind ATP. Catalysis depends on Asp908, which acts as the Proton acceptor. Low complexity predominate over residues 1054–1093 (NMTSGTSSSSLSSGGIGKSITDSKSSNSRSSVESSNTSNT). The interval 1054–1101 (NMTSGTSSSSLSSGGIGKSITDSKSSNSRSSVESSNTSNTFRGIDRHN) is disordered. A Guanylate cyclase domain is found at 1109–1252 (TVAFIDIISA…STVNITGKIT (144 aa)). Residues 1364–1615 (ISIGKQIGLG…MTEVVQQLML (252 aa)) enclose the Protein kinase 2 domain. Residues 1370–1378 (IGLGSYGIV) and Lys1391 contribute to the ATP site. The active-site Proton acceptor is Asp1487.

It is found in the membrane. It carries out the reaction L-seryl-[protein] + ATP = O-phospho-L-seryl-[protein] + ADP + H(+). It catalyses the reaction L-threonyl-[protein] + ATP = O-phospho-L-threonyl-[protein] + ADP + H(+). The chain is Putative serine/threonine-protein kinase/receptor R831 from Acanthamoeba polyphaga (Amoeba).